A 242-amino-acid polypeptide reads, in one-letter code: Haloacid dehalogenase-like hydrolase domain-containing protein 3 (242 aa).

It belongs to the HAD-like hydrolase superfamily.

The protein is Haloacid dehalogenase-like hydrolase domain-containing protein 3 (hdhd3) of Danio rerio (Zebrafish).